We begin with the raw amino-acid sequence, 209 residues long: Molybdenum cofactor guanylyltransferase (209 aa).

Residues 16 to 18, Lys-28, Asn-56, Asp-69, and Asp-103 each bind GTP; that span reads LAG. Asp-103 is a binding site for Mg(2+).

Belongs to the MobA family. In terms of assembly, monomer. Mg(2+) is required as a cofactor.

It is found in the cytoplasm. The enzyme catalyses Mo-molybdopterin + GTP + H(+) = Mo-molybdopterin guanine dinucleotide + diphosphate. Functionally, transfers a GMP moiety from GTP to Mo-molybdopterin (Mo-MPT) cofactor (Moco or molybdenum cofactor) to form Mo-molybdopterin guanine dinucleotide (Mo-MGD) cofactor. In Rhizobium johnstonii (strain DSM 114642 / LMG 32736 / 3841) (Rhizobium leguminosarum bv. viciae), this protein is Molybdenum cofactor guanylyltransferase.